Here is a 122-residue protein sequence, read N- to C-terminus: Large ribosomal subunit protein uL14 (122 aa).

Belongs to the universal ribosomal protein uL14 family. As to quaternary structure, part of the 50S ribosomal subunit. Forms a cluster with proteins L3 and L19. In the 70S ribosome, L14 and L19 interact and together make contacts with the 16S rRNA in bridges B5 and B8.

Its function is as follows. Binds to 23S rRNA. Forms part of two intersubunit bridges in the 70S ribosome. The polypeptide is Large ribosomal subunit protein uL14 (Latilactobacillus sakei subsp. sakei (strain 23K) (Lactobacillus sakei subsp. sakei)).